The chain runs to 636 residues: Outer spore wall assembly protein SHE10 (636 aa).

The first 23 residues, 1-23 (MRLVSKLLKALLVLLLAFGSVRY), serve as a signal peptide directing secretion. Coiled coils occupy residues 433 to 460 (RAHLRKLADEVNDHVEVLRQENVELFEE) and 551 to 584 (KANLEFQAREALERQQREKEKAESASMKASTEFE). The tract at residues 565–607 (QQREKEKAESASMKASTEFELSSSSFSSSSPSTASSCTASSTS) is disordered. The span at 579-607 (ASTEFELSSSSFSSSSPSTASSCTASSTS) shows a compositional bias: low complexity.

This sequence belongs to the SHE10 family. As to quaternary structure, component of the mitochondria-localized RNase mitochondrial RNA-processing (RNase MRP) composed of one single RNA encoded by the NME1 gene and at least 31 proteins. Absent in the nucleus-localized RNase MRP (NuMRP).

The protein localises to the mitochondrion. Functionally, involved in spore wall assembly. May be a component of the mitochondrial RNase MRP (MtMRP), a ribonucleoprotein endoribonuclease involved in the cleaving RNA transcripts to generate primers for DNA replication in mitochondria. In Kluyveromyces lactis (strain ATCC 8585 / CBS 2359 / DSM 70799 / NBRC 1267 / NRRL Y-1140 / WM37) (Yeast), this protein is Outer spore wall assembly protein SHE10.